The sequence spans 760 residues: Catecholate siderophore receptor Fiu (760 aa).

An N-terminal signal peptide occupies residues 1–31; the sequence is MENNRNFPARQFHSLTFFAGLCIGITPVAQA. Residues 67–175 enclose the TBDR plug domain; sequence PVADTTRTMT…PTGSINMISK (109 aa). Positions 180–760 constitute a TBDR beta-barrel domain; the sequence is DSGIDASASI…TFLLTANMHF (581 aa). The TonB C-terminal box motif lies at 743–760; the sequence is RYHPGEPRTFLLTANMHF.

Belongs to the TonB-dependent receptor family.

The protein localises to the cell outer membrane. In terms of biological role, involved in the active transport across the outer membrane of iron complexed with catecholate siderophores such as dihydroxybenzoylserine and dihydroxybenzoate. It derives its energy for transport by interacting with the trans-periplasmic membrane protein TonB. Can also transport catechol-substituted cephalosporins. Receptor for microcins M, H47 and E492. The chain is Catecholate siderophore receptor Fiu (fiu) from Escherichia coli (strain UTI89 / UPEC).